The chain runs to 319 residues: Acetyl-coenzyme A carboxylase carboxyl transferase subunit alpha (319 aa).

The 255-residue stretch at 38 to 292 folds into the CoA carboxyltransferase C-terminal domain; it reads ALDKKAETLL…GKAIEMMLKE (255 aa).

It belongs to the AccA family. As to quaternary structure, acetyl-CoA carboxylase is a heterohexamer composed of biotin carboxyl carrier protein (AccB), biotin carboxylase (AccC) and two subunits each of ACCase subunit alpha (AccA) and ACCase subunit beta (AccD).

The protein resides in the cytoplasm. The enzyme catalyses N(6)-carboxybiotinyl-L-lysyl-[protein] + acetyl-CoA = N(6)-biotinyl-L-lysyl-[protein] + malonyl-CoA. Its pathway is lipid metabolism; malonyl-CoA biosynthesis; malonyl-CoA from acetyl-CoA: step 1/1. Component of the acetyl coenzyme A carboxylase (ACC) complex. First, biotin carboxylase catalyzes the carboxylation of biotin on its carrier protein (BCCP) and then the CO(2) group is transferred by the carboxyltransferase to acetyl-CoA to form malonyl-CoA. This is Acetyl-coenzyme A carboxylase carboxyl transferase subunit alpha from Cereibacter sphaeroides (strain ATCC 17029 / ATH 2.4.9) (Rhodobacter sphaeroides).